The following is a 1040-amino-acid chain: Multidrug resistance protein MdtB (1040 aa).

12 helical membrane passes run 16-36 (FILR…AGII), 347-367 (LMLA…NIPA), 369-389 (IIPA…MVFL), 396-416 (LTLM…IVVI), 440-460 (IGFT…PLLF), 472-492 (FAVT…TLTP), 537-557 (WLTL…WIFI), 863-883 (LGST…VLGV), 888-908 (FIHP…ALLA), 911-931 (IAGA…IGIV), 968-988 (ILMT…STGV), and 998-1018 (IGMV…TPVI).

The protein belongs to the resistance-nodulation-cell division (RND) (TC 2.A.6) family. MdtB subfamily. In terms of assembly, part of a tripartite efflux system composed of MdtA, MdtB and MdtC. MdtB forms a heteromultimer with MdtC.

It is found in the cell inner membrane. The sequence is that of Multidrug resistance protein MdtB from Cronobacter sakazakii (strain ATCC BAA-894) (Enterobacter sakazakii).